Consider the following 345-residue polypeptide: Leucine-rich repeat and transmembrane domain-containing protein 1 (345 aa).

An N-terminal signal peptide occupies residues 1-27; it reads MKGELLLFSSVIVLLQVVCSCPDKCYC. Residues 28–50 enclose the LRRNT domain; the sequence is QSSTNFVDCSQQGLAEIPSHLPP. The Extracellular segment spans residues 28–288; the sequence is QSSTNFVDCS…PANLRHAIAT (261 aa). LRR repeat units lie at residues 51-72, 75-96, 99-120, 123-144, and 147-168; these read QTRT…AFRS, WLMT…AFHG, HLQV…LFHS, QLRE…LGET, and NLTI…LLES. An N-linked (GlcNAc...) asparagine glycan is attached at asparagine 104. Residue asparagine 147 is glycosylated (N-linked (GlcNAc...) asparagine). The 55-residue stretch at 180-234 folds into the LRRCT domain; that stretch reads NLWKCNCHLLGLKLWLEKFVYKGGLTDGIICESPDTWKGKDLLRIPHELYQPCPL. Residues 289–309 form a helical membrane-spanning segment; that stretch reads VIITGVVCGIVCLMMLAAAIY. Residues 310-345 are Cytoplasmic-facing; sequence GCTYAAITAQYHGGPLAQTNDPGKVEEKERFDSSPA. The tract at residues 326 to 345 is disordered; it reads AQTNDPGKVEEKERFDSSPA. Over residues 332 to 345 the composition is skewed to basic and acidic residues; sequence GKVEEKERFDSSPA.

The protein localises to the membrane. This is Leucine-rich repeat and transmembrane domain-containing protein 1 (LRTM1) from Homo sapiens (Human).